The sequence spans 485 residues: Glutamate--tRNA ligase (485 aa).

The short motif at 11–21 (PSPTGHLHIGN) is the 'HIGH' region element. Positions 252 to 256 (KLSKR) match the 'KMSKS' region motif. Residue lysine 255 participates in ATP binding.

It belongs to the class-I aminoacyl-tRNA synthetase family. Glutamate--tRNA ligase type 1 subfamily. Monomer.

Its subcellular location is the cytoplasm. It carries out the reaction tRNA(Glu) + L-glutamate + ATP = L-glutamyl-tRNA(Glu) + AMP + diphosphate. Functionally, catalyzes the attachment of glutamate to tRNA(Glu) in a two-step reaction: glutamate is first activated by ATP to form Glu-AMP and then transferred to the acceptor end of tRNA(Glu). The chain is Glutamate--tRNA ligase from Bacillus cereus (strain ATCC 10987 / NRS 248).